The primary structure comprises 240 residues: UDP-2,3-diacylglucosamine hydrolase (240 aa).

The Mn(2+) site is built by D9, H11, D43, N81, and H116. 81–82 (NR) is a substrate binding site. 5 residues coordinate substrate: D124, S162, K166, K169, and H197. Mn(2+) contacts are provided by H197 and H199.

Belongs to the LpxH family. Mn(2+) serves as cofactor.

It localises to the cell inner membrane. It carries out the reaction UDP-2-N,3-O-bis[(3R)-3-hydroxytetradecanoyl]-alpha-D-glucosamine + H2O = 2-N,3-O-bis[(3R)-3-hydroxytetradecanoyl]-alpha-D-glucosaminyl 1-phosphate + UMP + 2 H(+). It functions in the pathway glycolipid biosynthesis; lipid IV(A) biosynthesis; lipid IV(A) from (3R)-3-hydroxytetradecanoyl-[acyl-carrier-protein] and UDP-N-acetyl-alpha-D-glucosamine: step 4/6. Functionally, hydrolyzes the pyrophosphate bond of UDP-2,3-diacylglucosamine to yield 2,3-diacylglucosamine 1-phosphate (lipid X) and UMP by catalyzing the attack of water at the alpha-P atom. Involved in the biosynthesis of lipid A, a phosphorylated glycolipid that anchors the lipopolysaccharide to the outer membrane of the cell. The protein is UDP-2,3-diacylglucosamine hydrolase of Neisseria gonorrhoeae (strain ATCC 700825 / FA 1090).